A 283-amino-acid chain; its full sequence is Non-selective voltage-gated ion channel VDAC3 (283 aa).

An N-acetylcysteine modification is found at C2. At T4 the chain carries Phosphothreonine. N6-acetyllysine occurs at positions 12, 15, and 20. 2 consecutive transmembrane segments (beta stranded) span residues 26–35 (MVKIDLKTKS) and 39–47 (VEFSTSGHA). Glycyl lysine isopeptide (Lys-Gly) (interchain with G-Cter in ubiquitin) cross-links involve residues K53 and K61. Beta stranded transmembrane passes span 54–64 (ASGNLETKYKV), 69–76 (LTFTQKWN), and 80–89 (TLGTEISWEN). The residue at position 90 (K90) is an N6-acetyllysine. A beta stranded transmembrane segment spans residues 95–104 (LKLTLDTIFV). Residues K109 and K110 each participate in a glycyl lysine isopeptide (Lys-Gly) (interchain with G-Cter in ubiquitin) cross-link. 10 beta stranded membrane-spanning segments follow: residues 111–120 (SGKLKASYKR), 123–130 (FSVGSNVD), 137–145 (TIYGWAVLA), 150–158 (LAGYQMSFD), 163–175 (KLSQ…GYKA), 178–185 (FQLHTHVN), 189–198 (EFGGSIYQKV), 202–211 (IETSINLAWT), 218–227 (RFGIAAKYML), and 231–238 (TSLSAKVN). K163 participates in a covalent cross-link: Glycyl lysine isopeptide (Lys-Gly) (interchain with G-Cter in ubiquitin). S241 carries the phosphoserine modification. Residues 242–244 (LIG) and 260–264 (SALID) each bind NAD(+). 2 beta stranded membrane passes run 242-251 (LIGLGYTQTL) and 254-263 (GVKLTLSALI). The residue at position 266 (K266) is an N6-acetyllysine; alternate. Residue K266 forms a Glycyl lysine isopeptide (Lys-Gly) (interchain with G-Cter in ubiquitin); alternate linkage. A beta stranded membrane pass occupies residues 273 to 282 (HKVGLGFELE). K274 participates in a covalent cross-link: Glycyl lysine isopeptide (Lys-Gly) (interchain with G-Cter in ubiquitin).

The protein belongs to the eukaryotic mitochondrial porin family. In terms of assembly, interacts with ARMC12 in a TBC1D21-dependent manner. Interacts with MISFA. Ubiquitinated by PRKN during mitophagy, leading to its degradation and enhancement of mitophagy. Deubiquitinated by USP30. Expressed in erythrocytes (at protein level). Widely expressed. Highest in testis.

It localises to the mitochondrion outer membrane. Its subcellular location is the membrane. The catalysed reaction is chloride(in) = chloride(out). It catalyses the reaction K(+)(in) = K(+)(out). Functionally, non-selective voltage-gated ion channel that mediates the transport of anions and cations through the mitochondrion outer membrane and plasma membrane. Forms a high-conducting channel with a stable open state and a voltage-induced closure with a mild preference for anions over cations. Involved in male fertility and sperm mitochondrial sheath formation. This Homo sapiens (Human) protein is Non-selective voltage-gated ion channel VDAC3.